The sequence spans 201 residues: Imidazoleglycerol-phosphate dehydratase (201 aa).

This sequence belongs to the imidazoleglycerol-phosphate dehydratase family.

The protein localises to the cytoplasm. It catalyses the reaction D-erythro-1-(imidazol-4-yl)glycerol 3-phosphate = 3-(imidazol-4-yl)-2-oxopropyl phosphate + H2O. It functions in the pathway amino-acid biosynthesis; L-histidine biosynthesis; L-histidine from 5-phospho-alpha-D-ribose 1-diphosphate: step 6/9. The chain is Imidazoleglycerol-phosphate dehydratase from Prochlorococcus marinus subsp. pastoris (strain CCMP1986 / NIES-2087 / MED4).